The following is a 395-amino-acid chain: Phosphoprotein (395 aa).

Disordered regions lie at residues V34–A104, N126–A179, and L192–V214. Residues T65–K74 are compositionally biased toward basic and acidic residues. Composition is skewed to polar residues over residues P89–T98 and P147–D178. Positions D222–G285 are multimerization.

It belongs to the rubulavirus/avulavirus P protein family. Homotetramer. Interacts (via multimerization domain) with polymerase L; this interaction forms the polymerase L-P complex. Interacts (via N-terminus) with N0 (via Ncore); this interaction allows P to chaperon N0 to avoid N polymerization before encapsidation. Interacts (via C-terminus) with N-RNA template; this interaction positions the polymerase on the template for both transcription and replication.

Functionally, essential cofactor of the RNA polymerase L that plays a central role in the transcription and replication by forming the polymerase complex with RNA polymerase L and recruiting L to the genomic N-RNA template for RNA synthesis. Also plays a central role in the encapsidation of nascent RNA chains by forming the encapsidation complex with the nucleocapsid protein N (N-P complex). Acts as a chaperone for newly synthesized free N protein, so-called N0, allowing encapsidation of nascent RNA chains during replication. The nucleoprotein protein N prevents excessive phosphorylation of P, which leads to down-regulation of viral transcription/ replication. Participates, together with N, in the formation of viral factories (viroplasms), which are large inclusions in the host cytoplasm where replication takes place. This chain is Phosphoprotein (P/V), found in Newcastle disease virus (strain Ulster/2C) (NDV).